We begin with the raw amino-acid sequence, 250 residues long: NADH-quinone oxidoreductase subunit C (250 aa).

Disordered regions lie at residues 1-33 (MSDDSSDVKPGPKGPEQPAVEQSPENVPAPTGE) and 228-250 (LGGVPVEYKGGTVPPPDQRRSYN).

Belongs to the complex I 30 kDa subunit family. In terms of assembly, NDH-1 is composed of 14 different subunits. Subunits NuoB, C, D, E, F, and G constitute the peripheral sector of the complex.

The protein resides in the cell membrane. The enzyme catalyses a quinone + NADH + 5 H(+)(in) = a quinol + NAD(+) + 4 H(+)(out). NDH-1 shuttles electrons from NADH, via FMN and iron-sulfur (Fe-S) centers, to quinones in the respiratory chain. The immediate electron acceptor for the enzyme in this species is believed to be a menaquinone. Couples the redox reaction to proton translocation (for every two electrons transferred, four hydrogen ions are translocated across the cytoplasmic membrane), and thus conserves the redox energy in a proton gradient. This Nocardioides sp. (strain ATCC BAA-499 / JS614) protein is NADH-quinone oxidoreductase subunit C.